The chain runs to 284 residues: 2-dehydro-3-deoxyphosphooctonate aldolase (284 aa).

The protein belongs to the KdsA family.

It is found in the cytoplasm. It catalyses the reaction D-arabinose 5-phosphate + phosphoenolpyruvate + H2O = 3-deoxy-alpha-D-manno-2-octulosonate-8-phosphate + phosphate. The protein operates within carbohydrate biosynthesis; 3-deoxy-D-manno-octulosonate biosynthesis; 3-deoxy-D-manno-octulosonate from D-ribulose 5-phosphate: step 2/3. Its pathway is bacterial outer membrane biogenesis; lipopolysaccharide biosynthesis. This Burkholderia orbicola (strain MC0-3) protein is 2-dehydro-3-deoxyphosphooctonate aldolase.